Here is a 288-residue protein sequence, read N- to C-terminus: Protease HtpX homolog (288 aa).

Helical transmembrane passes span 6-26 (TAFLMVALMLVFIAVGGYVGG) and 28-48 (QGMMIAFLMAAGMNIFSYFFS). Histidine 130 lines the Zn(2+) pocket. Residue glutamate 131 is part of the active site. Histidine 134 contributes to the Zn(2+) binding site. The next 2 membrane-spanning stretches (helical) occupy residues 140–160 (ILTGSVAAILAGAIAMVANFA) and 179–199 (VIMLIIAVVMPLAATVIQMAI). Glutamate 204 is a binding site for Zn(2+).

The protein belongs to the peptidase M48B family. The cofactor is Zn(2+).

The protein localises to the cell inner membrane. This Campylobacter concisus (strain 13826) protein is Protease HtpX homolog.